Here is a 503-residue protein sequence, read N- to C-terminus: Hemogen (503 aa).

2 stretches are compositionally biased toward basic residues: residues 1–10 (MDMGKGRPRL) and 61–79 (KKRK…RKRQ). Positions 1 to 129 (MDMGKGRPRL…PLVPSPTKAV (129 aa)) are disordered. Residues 7-87 (RPRLKLPQMP…RQGNVEQKAE (81 aa)) form a necessary for nuclear localization region. Residues S90, S103, S124, S153, S158, S171, S213, S223, S228, S241, and S269 each carry the phosphoserine modification. The residue at position 286 (T286) is a Phosphothreonine. The disordered stretch occupies residues 381–503 (QKTIQESPEP…ENGIYSSALF (123 aa)). Positions 385 to 396 (QESPEPEQYSPE) are enriched in low complexity. S387 and S394 each carry phosphoserine. Positions 426 to 436 (CQDREEPKHSL) are enriched in basic and acidic residues.

Expressed in hematopoietic precursor cells. Highly expressed in bone marrow, the red pulp of the spleen and round spermatids. Weakly expressed in peripheral blood cells.

It localises to the nucleus. Regulates the proliferation and differentiation of hematopoietic cells. Overexpression block the TPA-induced megakaryocytic differentiation in the K562 cell model. May also prevent cell apoptosis through the activation of the nuclear factor-kappa B (NF-kB). The chain is Hemogen (Hemgn) from Mus musculus (Mouse).